The following is a 317-amino-acid chain: Cold tolerance protein 1 (317 aa).

The protein belongs to the CTO1 family.

Functionally, protein required for cold tolerance. Plays a role in the regulation of phosphate uptake. In Saccharomyces cerevisiae (strain ATCC 204508 / S288c) (Baker's yeast), this protein is Cold tolerance protein 1.